Reading from the N-terminus, the 177-residue chain is R-phycoerythrin beta chain (177 aa).

2 residues coordinate (2R,3E)-phycoerythrobilin: Asn-35 and Asp-39. The phycourobilin site is built by Cys-50, Asp-54, and Cys-61. (2R,3E)-phycoerythrobilin is bound by residues Asn-72, 77-78, Cys-82, and 84-85; these read RR and RD. Asn-72 carries the N4-methylasparagine modification. 147-148 provides a ligand contact to phycourobilin; sequence SG. Position 158 (Cys-158) interacts with (2R,3E)-phycoerythrobilin.

This sequence belongs to the phycobiliprotein family. In terms of assembly, heterododecamer of 6 alpha and 6 beta chains. The basic functional unit of phycobiliproteins is a ring-shaped hexamer formed from two back-to-back trimers contacting via the alpha chain subunits. The trimers are composed of alpha/beta subunit heterodimers arranged around a three-fold axis of symmetry. The phycoerythrins also contain a gamma subunit which is located in the center of the hexamer. In terms of processing, contains two covalently linked phycoerythrobilin chromophores and one covalently linked phycourobilin chromophore.

It is found in the plastid. The protein resides in the chloroplast thylakoid membrane. In terms of biological role, light-harvesting photosynthetic tetrapyrrole chromophore-protein from the phycobiliprotein complex. The protein is R-phycoerythrin beta chain (cpeB) of Griffithsia monilis (Red alga).